The chain runs to 199 residues: MKITDQLIPTVIESTGRYERAYDIYSRLLKDRIVFLGYAIDDHVANLVVAQLLFLEAEDPDKDIQLYINSPGGSVTAGLAIYDTMQYIKSDVVTICVGQAASMAAVLLASGTKGKRFALPNARIMLHQPLGGAEGPVKDVEIITKELLRIKNLINTILSEKTGQPLDRIEKDTDRDFFMSAYEALDYGLVDKVIESKRR.

Ser-102 (nucleophile) is an active-site residue. His-127 is an active-site residue.

Belongs to the peptidase S14 family. In terms of assembly, fourteen ClpP subunits assemble into 2 heptameric rings which stack back to back to give a disk-like structure with a central cavity, resembling the structure of eukaryotic proteasomes.

It localises to the cytoplasm. The enzyme catalyses Hydrolysis of proteins to small peptides in the presence of ATP and magnesium. alpha-casein is the usual test substrate. In the absence of ATP, only oligopeptides shorter than five residues are hydrolyzed (such as succinyl-Leu-Tyr-|-NHMec, and Leu-Tyr-Leu-|-Tyr-Trp, in which cleavage of the -Tyr-|-Leu- and -Tyr-|-Trp bonds also occurs).. In terms of biological role, cleaves peptides in various proteins in a process that requires ATP hydrolysis. Has a chymotrypsin-like activity. Plays a major role in the degradation of misfolded proteins. The protein is ATP-dependent Clp protease proteolytic subunit of Pseudothermotoga lettingae (strain ATCC BAA-301 / DSM 14385 / NBRC 107922 / TMO) (Thermotoga lettingae).